A 4069-amino-acid chain; its full sequence is Cardiomyopathy-associated protein 5 (4069 aa).

Disordered regions lie at residues 1 to 177, 341 to 387, 442 to 525, 538 to 558, 597 to 705, 732 to 793, 844 to 872, 890 to 948, 979 to 1009, 1041 to 1097, 1160 to 1179, 1205 to 1237, 1540 to 1575, 1594 to 1742, 1757 to 1809, 1892 to 1988, 2064 to 2175, 2187 to 2259, 2385 to 2412, 2425 to 2463, 2494 to 2527, 2653 to 2706, and 2750 to 2862; these read MASR…SQVL, TVPS…DTPA, GLAA…EDSN, ESPLVSEKPFPPHMSPEVEHK, EYSV…VPSL, PSEE…RFTP, SSPDLVVASEHSFPPHTTEMTSECQAPPL, LERY…FSPD, TSPSEHTILSDEDTEEAELFSPDSASQVSIP, ADEE…PEIP, VKEETKPASPHSVLPDSVPA, RKEEIVPDSQEATAHVSQDQKMEPQPPNVPESE, KETELPSSQNVSPASKHIIPKGKDEETASSSPELEN, PAVE…EEFQ, HPAD…ITEP, ENWM…VKLA, TISS…KKGI, FGSS…SGDG, PQQPKSASSNFASKNITKESEKPESIIL, SEDRLKKEMQNPTSLKISEEETKLRSVSPTEKKDNLENR, TQITLGSRSTELKESKADAMPQHFYQNEDYNERP, QEGN…VGTQ, and SSRD…SDVP. A compositionally biased stretch (acidic residues) spans 27 to 47; sequence ETEEESEGEEDETAAESEEEP. The segment covering 48 to 62 has biased composition (basic and acidic residues); it reads DSRLSDQDEEGKIKQ. Polar residues predominate over residues 84–119; sequence TWETNSSRSSTPWASEESQTSGVCSREGSTVNSPPG. Positions 130-153 are enriched in basic residues; that stretch reads KVRKRTHKSKHGSPSLRRKGNRKR. At Ser-155 the chain carries Phosphoserine. 2 stretches are compositionally biased toward polar residues: residues 156-177 and 341-350; these read FESQDVPTNKKGSPLTSASQVL and TVPSYSSSGR. Positions 489–499 are enriched in low complexity; it reads LEPSISLSEPL. The segment covering 500 to 510 has biased composition (acidic residues); sequence MLEEPEKEEIE. A Phosphoserine modification is found at Ser-631. The segment covering 640–659 has biased composition (low complexity); the sequence is AYSPAAAPTSESSLSPSTTE. Polar residues-rich tracts occupy residues 664–673, 692–701, and 752–775; these read NQSPLFSTVT, PDSTSASEYS, and PSLSPSTTEKTSECQSPLPSTATS. Over residues 1049-1063 the composition is skewed to polar residues; it reads TAATPVSEQFSSSQK. Residues 1085 to 1094 are compositionally biased toward basic and acidic residues; that stretch reads DKSEKAEIKP. Residues 1214–1223 show a composition bias toward polar residues; sequence QEATAHVSQD. Residues 1621–1630 are compositionally biased toward basic and acidic residues; the sequence is EPEKKDKPHQ. Over residues 1639 to 1662 the composition is skewed to polar residues; sequence SEFSSDLGRQSGSIGTKQAKSPIT. Composition is skewed to basic and acidic residues over residues 1668 to 1687, 1704 to 1714, and 1786 to 1795; these read VLEKGPAELRSREGKEENRE, LREESQNEEIK, and ILDKLSEETG. Polar residues predominate over residues 1796–1808; that stretch reads HPNSSQVLQSITE. Basic and acidic residues predominate over residues 1935–1955; the sequence is SKDHTCEVRKQVLPHSAEESH. Residues 1956–1980 show a composition bias toward polar residues; that stretch reads LSSQEAVSALDTSSGNTETLSSKSY. The span at 2085–2124 shows a compositional bias: basic and acidic residues; that stretch reads NEKEAHRSTPPFPEEKPLEESKMVQSKVIDDADEGKKPSP. The span at 2145–2155 shows a compositional bias: polar residues; sequence SPESPEVTQNP. 2 stretches are compositionally biased toward basic and acidic residues: residues 2162-2172 and 2232-2250; these read AKPDLPEEKGK and KPADHSLSEVKLKTADEPR. A compositionally biased stretch (polar residues) spans 2387-2399; the sequence is QPKSASSNFASKN. The residue at position 2404 (Ser-2404) is a Phosphoserine. Residues 2441 to 2461 are compositionally biased toward basic and acidic residues; sequence ISEEETKLRSVSPTEKKDNLE. Composition is skewed to basic and acidic residues over residues 2661-2681, 2750-2769, and 2777-2804; these read KSSRDMPDHSEEKEQFRESEL, SSRDMPDHSEEKEQFKESEL, and ITKESMKEGFPSKESERTLARPFDETKS. Ser-2813 is subject to Phosphoserine. The span at 2830-2847 shows a compositional bias: basic and acidic residues; the sequence is AVKKKEMPRSELTPERHT. Residues 2964–2988 adopt a coiled-coil conformation; sequence SIDQEESEQMQDKLEYLEEKASFKT. Residues 3015 to 3031 are compositionally biased toward basic and acidic residues; sequence PLKENKQKETHKTKEEI. Disordered stretches follow at residues 3015–3037, 3119–3156, 3204–3231, 3386–3421, and 3465–3495; these read PLKENKQKETHKTKEEISTDSET, EKGHNILSHPETQSQNSADRNVSKDTKRDVDSKSPGMP, KKKEEETASEGDSVNSEASFPSRNSDTD, SGATHVQETSLEEPKILVPPEPSEERLRNSPVQDEY, and EFASEAEQSTPAEQKELGSERKEEDQLSSEV. The interval 3052-3365 is required for RYR2 clustering; sequence YFEKYTLIDY…GSHGNEVGNA (314 aa). Residues 3128-3138 are compositionally biased toward polar residues; it reads PETQSQNSADR. Residues 3139 to 3150 are compositionally biased toward basic and acidic residues; it reads NVSKDTKRDVDS. Residues 3213-3227 are compositionally biased toward polar residues; sequence EGDSVNSEASFPSRN. The residue at position 3228 (Ser-3228) is a Phosphoserine. Residues 3477 to 3489 are compositionally biased toward basic and acidic residues; the sequence is EQKELGSERKEED. The segment at 3517–3544 is amphipathic helix H1; it reads KCPISATDKVFGTHKDHEVSTLDTAISA. The stretch at 3544–3653 forms a coiled coil; it reads AVKVQLAEFL…REAEELDEAV (110 aa). The B-box coiled-coil; BBC stretch occupies residues 3545-3672; sequence VKVQLAEFLE…ERLLSAMEST (128 aa). Positions 3631-3648 are amphipathic helix H2; the sequence is SMDTAKDTLETIVREAEE. 2 consecutive Fibronectin type-III domains span residues 3704-3805 and 3806-3898; these read VPQP…TAPS and TPVI…TRGT. An amphipathic helix H3 region spans residues 3751–3767; that stretch reads EVNELVEEYRLTVKESY. The region spanning 3880–4065 is the B30.2/SPRY domain; sequence NAFGTSEQSE…LHLGIEPPDS (186 aa).

As to quaternary structure, interacts with PRKAR2A. Interacts with ACTN2 and DTNBP1/dysbindin. Interacts with DES. Interacts with DMD/dystrophin. Interacts with the calcineurin catalytic subunit PPP3CA. Interacts with TTN. Interacts with CAPN3; this interaction, which results in CMYA5 proteolysis, may protect CAPN3 from autolysis. Interacts with FSD2. Identified in a complex composed of FSD2, CMYA5 and RYR2. Phosphorylated by PKA. As to expression, expressed in skeletal muscle; at a strong level and in heart.

It localises to the nucleus. It is found in the sarcoplasmic reticulum. The protein localises to the cytoplasm. Its subcellular location is the perinuclear region. The protein resides in the myofibril. It localises to the sarcomere. It is found in the m line. May serve as an anchoring protein that mediates the subcellular compartmentation of protein kinase A (PKA) via binding to PRKAR2A. May function as a repressor of calcineurin-mediated transcriptional activity. May attenuate calcineurin ability to induce slow-fiber gene program in muscle and may negatively modulate skeletal muscle regeneration. Plays a role in the assembly of ryanodine receptor (RYR2) clusters in striated muscle. This is Cardiomyopathy-associated protein 5 (CMYA5) from Homo sapiens (Human).